Here is a 199-residue protein sequence, read N- to C-terminus: Nucleoside triphosphate pyrophosphatase (199 aa).

Catalysis depends on Asp-76, which acts as the Proton acceptor.

Belongs to the Maf family. It depends on a divalent metal cation as a cofactor.

It is found in the cytoplasm. The enzyme catalyses a ribonucleoside 5'-triphosphate + H2O = a ribonucleoside 5'-phosphate + diphosphate + H(+). It carries out the reaction a 2'-deoxyribonucleoside 5'-triphosphate + H2O = a 2'-deoxyribonucleoside 5'-phosphate + diphosphate + H(+). Functionally, nucleoside triphosphate pyrophosphatase. May have a dual role in cell division arrest and in preventing the incorporation of modified nucleotides into cellular nucleic acids. The sequence is that of Nucleoside triphosphate pyrophosphatase from Roseobacter denitrificans (strain ATCC 33942 / OCh 114) (Erythrobacter sp. (strain OCh 114)).